The following is a 271-amino-acid chain: Tryptophan synthase alpha chain (271 aa).

Active-site proton acceptor residues include E51 and D62.

The protein belongs to the TrpA family. Tetramer of two alpha and two beta chains.

The enzyme catalyses (1S,2R)-1-C-(indol-3-yl)glycerol 3-phosphate + L-serine = D-glyceraldehyde 3-phosphate + L-tryptophan + H2O. It functions in the pathway amino-acid biosynthesis; L-tryptophan biosynthesis; L-tryptophan from chorismate: step 5/5. The alpha subunit is responsible for the aldol cleavage of indoleglycerol phosphate to indole and glyceraldehyde 3-phosphate. The chain is Tryptophan synthase alpha chain from Prochlorococcus marinus (strain NATL2A).